Here is a 277-residue protein sequence, read N- to C-terminus: Urease accessory protein UreD (277 aa).

This sequence belongs to the UreD family. As to quaternary structure, ureD, UreF and UreG form a complex that acts as a GTP-hydrolysis-dependent molecular chaperone, activating the urease apoprotein by helping to assemble the nickel containing metallocenter of UreC. The UreE protein probably delivers the nickel.

It localises to the cytoplasm. In terms of biological role, required for maturation of urease via the functional incorporation of the urease nickel metallocenter. The sequence is that of Urease accessory protein UreD from Yersinia pestis (strain Pestoides F).